We begin with the raw amino-acid sequence, 413 residues long: Tyrosine--tRNA ligase (413 aa).

The short motif at 59–68 (PTAPDIHLGH) is the 'HIGH' region element. The 'KMSKS' region signature appears at 243 to 247 (KMSKS). Lysine 246 lines the ATP pocket. The region spanning 351 to 411 (LAIGQLLKQA…GKRRFARVTL (61 aa)) is the S4 RNA-binding domain.

This sequence belongs to the class-I aminoacyl-tRNA synthetase family. TyrS type 2 subfamily. As to quaternary structure, homodimer.

The protein localises to the cytoplasm. The enzyme catalyses tRNA(Tyr) + L-tyrosine + ATP = L-tyrosyl-tRNA(Tyr) + AMP + diphosphate + H(+). In terms of biological role, catalyzes the attachment of tyrosine to tRNA(Tyr) in a two-step reaction: tyrosine is first activated by ATP to form Tyr-AMP and then transferred to the acceptor end of tRNA(Tyr). The sequence is that of Tyrosine--tRNA ligase from Burkholderia thailandensis (strain ATCC 700388 / DSM 13276 / CCUG 48851 / CIP 106301 / E264).